Consider the following 292-residue polypeptide: Protease HtpX homolog (292 aa).

The next 2 membrane-spanning stretches (helical) occupy residues Thr7–Gly27 and Gly29–Ser49. His131 is a Zn(2+) binding site. The active site involves Glu132. His135 provides a ligand contact to Zn(2+). 2 helical membrane-spanning segments follow: residues Ala148–Gly168 and Leu178–Ile198. Residue Glu203 coordinates Zn(2+).

The protein belongs to the peptidase M48B family. It depends on Zn(2+) as a cofactor.

The protein localises to the cell inner membrane. In Paracoccus denitrificans (strain Pd 1222), this protein is Protease HtpX homolog.